We begin with the raw amino-acid sequence, 410 residues long: Transcription factor E2F4 (410 aa).

A disordered region spans residues Met-1–Lys-20. The residue at position 2 (Ala-2) is an N-acetylalanine. A DNA-binding region spans residues Ser-16–Gly-85. The tract at residues Leu-43 to Leu-65 is leucine-zipper. Positions Asp-48 to Gly-85 match the DEF box motif. A dimerization region spans residues Pro-86 to Ile-181. Disordered stretches follow at residues Pro-203–Gln-258 and Ser-303–Gly-341. Low complexity-rich tracts occupy residues Pro-231 to Pro-252 and Ser-308 to Ser-324. Positions Pro-334–Leu-410 are transactivation. At Ser-381 the chain carries Phosphoserine. Positions Asp-386–Tyr-389 match the HCFC1-binding-motif (HBM) motif. The segment at His-387–Asp-404 is interaction with RBL1 and RBL2.

It belongs to the E2F/DP family. As to quaternary structure, component of the DRTF1/E2F transcription factor complex. Binds cooperatively with TFDP1/Dp-1 to E2F sites. The E2F4/TFDP1 dimer interacts preferentially with pocket protein RBL1, which inhibits the E2F transactivation domain. Lower affinity interaction has been found with retinoblastoma protein RB1. Interacts with TRRAP, which probably mediates its interaction with histone acetyltransferase complexes, leading to transcription activation. Interacts with HCFC1. Component of the DREAM complex (also named LINC complex) at least composed of E2F4, E2F5, LIN9, LIN37, LIN52, LIN54, MYBL1, MYBL2, RBL1, RBL2, RBBP4, TFDP1 and TFDP2. The complex exists in quiescent cells where it represses cell cycle-dependent genes. It dissociates in S phase when LIN9, LIN37, LIN52 and LIN54 form a subcomplex that binds to MYBL2. Interacts with PML. Interacts with CEBPA (when phosphorylated). In terms of processing, differentially phosphorylated in vivo.

The protein resides in the nucleus. Functionally, transcription activator that binds DNA cooperatively with DP proteins through the E2 recognition site, 5'-TTTC[CG]CGC-3' found in the promoter region of a number of genes whose products are involved in cell cycle regulation or in DNA replication. The DRTF1/E2F complex functions in the control of cell-cycle progression from G1 to S phase. E2F4 binds with high affinity to RBL1 and RBL2. In some instances can also bind RB1. Specifically required for multiciliate cell differentiation: together with MCIDAS and E2F5, binds and activate genes required for centriole biogenesis. In Mus musculus (Mouse), this protein is Transcription factor E2F4 (E2f4).